We begin with the raw amino-acid sequence, 288 residues long: Phytanoyl-CoA dioxygenase domain-containing protein 1 homolog (288 aa).

Residues K95, M134, 149-151 (HVD), and W167 each bind 2-oxoglutarate. Fe cation is bound by residues H149 and D151. H242 contacts Fe cation. The 2-oxoglutarate site is built by S244 and R253.

It belongs to the PhyH family. PHYHD1 subfamily. The cofactor is Fe cation.

Its function is as follows. Has alpha-ketoglutarate-dependent dioxygenase activity. Does not show detectable activity towards fatty acid CoA thioesters. Is not expected to be active with phytanoyl CoA. The chain is Phytanoyl-CoA dioxygenase domain-containing protein 1 homolog from Caenorhabditis briggsae.